The chain runs to 564 residues: MFS-type transporter dmxR4 (564 aa).

The disordered stretch occupies residues 1–61; that stretch reads MSSERPDGSA…PAKEAPAKPA (61 aa). Over residues 25-44 the composition is skewed to polar residues; that stretch reads TDSSRTSNDASQTSQDTAVQ. Positions 47–57 are enriched in basic and acidic residues; it reads PPKEAPAKEAP. 5 consecutive transmembrane segments (helical) span residues 71–91, 106–126, 138–158, 169–189, and 199–219; these read IALL…DRSI, AGDI…FQLL, TVFV…GAAP, LAGI…VFLI, and GLFG…GGGF. Asn-222 is a glycosylation site (N-linked (GlcNAc...) asparagine). A run of 7 helical transmembrane segments spans residues 227–247, 265–285, 299–319, 348–368, 376–396, 405–425, and 438–458; these read WCFY…ALWM, GLDL…LLAL, IIAL…LQAF, GVHL…GGFF, SPLA…IYTF, WIGS…APNL, and SALA…VSVG. Residue Asn-469 is glycosylated (N-linked (GlcNAc...) asparagine). Helical transmembrane passes span 470 to 490 and 512 to 532; these read LSWI…VSFL and VFMI…SMEW. Positions 534–564 are disordered; sequence SVKSRGSWDEKPAAKPTDKPTEEKKVPPEAV. Basic and acidic residues predominate over residues 539-564; it reads GSWDEKPAAKPTDKPTEEKKVPPEAV.

This sequence belongs to the major facilitator superfamily. TCR/Tet family.

It localises to the membrane. In terms of biological role, MFS-type transporter; part of the gene cluster that mediates the biosynthesis of the dimeric xanthones cryptosporioptides. This is MFS-type transporter dmxR4 from Cryptosporiopsis sp. (strain 8999).